Here is a 72-residue protein sequence, read N- to C-terminus: Translation initiation factor IF-1 (72 aa).

The region spanning 1-72 (MSKEEAIEVE…SRGRITYRAK (72 aa)) is the S1-like domain.

Belongs to the IF-1 family. Component of the 30S ribosomal translation pre-initiation complex which assembles on the 30S ribosome in the order IF-2 and IF-3, IF-1 and N-formylmethionyl-tRNA(fMet); mRNA recruitment can occur at any time during PIC assembly.

It is found in the cytoplasm. Its function is as follows. One of the essential components for the initiation of protein synthesis. Stabilizes the binding of IF-2 and IF-3 on the 30S subunit to which N-formylmethionyl-tRNA(fMet) subsequently binds. Helps modulate mRNA selection, yielding the 30S pre-initiation complex (PIC). Upon addition of the 50S ribosomal subunit IF-1, IF-2 and IF-3 are released leaving the mature 70S translation initiation complex. This chain is Translation initiation factor IF-1, found in Geobacter metallireducens (strain ATCC 53774 / DSM 7210 / GS-15).